The chain runs to 95 residues: Fatty acid-binding protein, liver (95 aa).

Residues lysine 13 and lysine 18 each carry the N6-succinyllysine modification. Serine 21 carries the post-translational modification Phosphoserine. Lysine 28 is subject to N6-succinyllysine. Phosphothreonine is present on threonine 33. Position 38 is a phosphoserine (serine 38). N6-succinyllysine occurs at positions 39, 47, and 59. Phosphoserine is present on serine 69. Lysine 90 is subject to N6-succinyllysine.

This sequence belongs to the calycin superfamily. Fatty-acid binding protein (FABP) family. In terms of assembly, monomer.

The protein resides in the cytoplasm. This protein binds free fatty acids and their coenzyme A derivatives, bilirubin, and some other small molecules in the cytoplasm; it may be involved in intracellular lipid transport. This Chaetophractus villosus (South American armadillo) protein is Fatty acid-binding protein, liver (FABP1).